Reading from the N-terminus, the 441-residue chain is Serum response factor-binding protein 1 (441 aa).

Coiled coils occupy residues 52–77 and 118–140; these read KGTEDALLKNQRRAQRLLEEIHAMKE and LLKKKIDVLKDAVQAFKDARQSA. Disordered stretches follow at residues 137-342, 357-389, and 406-441; these read RQSA…RNDK, FHSLAGPKSSRRDPREQAPKNKAPDFPENEPPV, and QTMQAPLHPSWEASRRRKEQQSKIAVFQGKKITFDD. The span at 139–152 shows a compositional bias: low complexity; the sequence is SAPAAESSESTSGE. The segment covering 153 to 183 has biased composition (basic and acidic residues); the sequence is GRCKDIARSKDDARESQHPERTVVREQKAKD. Lysine 201 participates in a covalent cross-link: Glycyl lysine isopeptide (Lys-Gly) (interchain with G-Cter in SUMO2). Serine 214 is modified (phosphoserine). Positions 237–246 are enriched in polar residues; it reads DSNQGKASTK. The span at 269-282 shows a compositional bias: basic and acidic residues; that stretch reads EKEYFDDSTEERFY. 3 positions are modified to phosphoserine: serine 276, serine 291, and serine 293. Positions 308–321 are enriched in basic and acidic residues; it reads KESGVHSSAKELKP. Lysine 328 participates in a covalent cross-link: Glycyl lysine isopeptide (Lys-Gly) (interchain with G-Cter in SUMO2). The span at 366 to 381 shows a compositional bias: basic and acidic residues; that stretch reads SRRDPREQAPKNKAPD.

In terms of assembly, interacts with SRF. Forms complexes with SRF and SRF cofactors ARID2, MYOCD and NKX2-5. Interacts with the N-terminus of SLC2A4. As to expression, highly expressed in heart, skeletal muscle, liver, kidney, testis and brain. Also expressed in white adipose tissue. Expression is up-regulated in cardiomyopathic heart.

It localises to the cytoplasm. The protein resides in the perinuclear region. Its function is as follows. May be involved in regulating transcriptional activation of cardiac genes during the aging process. May play a role in biosynthesis and/or processing of SLC2A4 in adipose cells. The polypeptide is Serum response factor-binding protein 1 (Mus musculus (Mouse)).